The sequence spans 1097 residues: MAGASVKVAVRVRPFNARETSQDAKCVVSMQGNTTSIINPKQSRMFLKASFDYSYWSHTSVEDPQFASQQQVYRDIGEEMLLHAFEGYNVCIFAYGQTGAGKSYTMMGRQEPGQQGIVPQLCEDLFSRVNVNQSAQLSYSVEVSYMEIYCERVRDLLNPKSRGSLRVREHPILGPYVQDLSKLAVTSYADIADLMDCGNKARTVAATNMNETSSRSHAVFTIVFTQRSHDQLTGLDSEKVSKISLVNLAGSERADSSGARGMRLKEGANINKSLTTLGKVISALADLQSKKRKSDFIPYRDSVLTWLLKENLGGNSRTAMIAALSPADINYEETLSTLRYADRTKQIRCNAVINEDPNARLIRELQEEVARLRELLMAQGLSASALGGLKVEEGSPGGVLPAASSPPAPASPSSPPPHNGELEPSFSPSAEPQIGPEEAMERLQETEKIIAELNETWEEKLRKTEALRMEREALLAEMGSPGGWRTVGVFSPKKTPHLVNLNEDPLMSECLLYHIKDGVTRVGQVDVDIKLTGQFIREQHCLFRSIPQPDGEVMVTLEPCEGAETYVNGKLVTEPLVLKSGNRIVMGKNHVFRFNHPEQARLERERGVPPPPGPPSEPVDWNFAQKDWLEQQGIDIKLEMEKRLQDLENQYRKEKEEADLLLEQQRLYADSDSGEDSDKRSCEESWRLISSLRDELPPNTVQTIVKRCGLPSSGKRRAPRRVYQIPQRRRLQGKDPRWATMADLKMQAVKEICYEVALADFRHGRAEIEALAALKMRELCRTYGKPEGPGDAWRAVARDVWDTVGEEEGCGGGGGGGEEGARGAEVEDLRAHIDKLTGILQEVKLQNSSKDRELQALRDRMLRMERVIPLTQDLEDDNEESGLVTWAPPEGSEAVEEAVSNDHSPAVRPSSPPQSSWERVSRLMEEDPAFRRGRLRWLKQEQLRLQGLQGSGGRGGGLRRPPARFVPPHDCKLRFPFKSNPQHRESWPGMGSGEAPGPQPPEEVTAPPPPPNRRPPSPRRPHRPRRNSLDGGSRSRGGGSTQPEPQHLRPQKHNSYPQQPQPYPAQRPGPRYPPYTTPPRMRRQRSAPDLKESGAAV.

The region spanning 5–347 is the Kinesin motor domain; the sequence is SVKVAVRVRP…LRYADRTKQI (343 aa). An ATP-binding site is contributed by 96–103; it reads GQTGAGKS. The residue at position 294 (Ser-294) is a Phosphoserine. The stretch at 358 to 380 forms a coiled coil; sequence NARLIRELQEEVARLRELLMAQG. Residues 397–434 are disordered; that stretch reads GGVLPAASSPPAPASPSSPPPHNGELEPSFSPSAEPQI. The segment covering 404 to 418 has biased composition (pro residues); that stretch reads SSPPAPASPSSPPPH. The stretch at 437-478 forms a coiled coil; sequence EEAMERLQETEKIIAELNETWEEKLRKTEALRMEREALLAEM. Ser-491 is modified (phosphoserine). The FHA domain maps to 520–587; it reads TRVGQVDVDI…LKSGNRIVMG (68 aa). The stretch at 630 to 671 forms a coiled coil; the sequence is EQQGIDIKLEMEKRLQDLENQYRKEKEEADLLLEQQRLYADS. A phosphoserine mark is found at Ser-671 and Ser-673. Residues 824-868 are a coiled coil; it reads AEVEDLRAHIDKLTGILQEVKLQNSSKDRELQALRDRMLRMERVI. Disordered stretches follow at residues 897-921 and 946-1097; these read EAVS…ERVS and QGLQ…GAAV. Ser-911 is modified (phosphoserine). A compositionally biased stretch (gly residues) spans 949 to 958; that stretch reads QGSGGRGGGL. Residues 997–1015 are compositionally biased toward pro residues; that stretch reads GPQPPEEVTAPPPPPNRRP. Basic residues predominate over residues 1016-1026; sequence PSPRRPHRPRR. Position 1028 is a phosphoserine (Ser-1028). Position 1036 is an omega-N-methylarginine (Arg-1036). Positions 1059 to 1077 are enriched in pro residues; it reads QPQPYPAQRPGPRYPPYTT. Thr-1077 carries the post-translational modification Phosphothreonine. Ser-1086 is modified (phosphoserine). Basic and acidic residues predominate over residues 1086-1097; that stretch reads SAPDLKESGAAV.

The protein belongs to the TRAFAC class myosin-kinesin ATPase superfamily. Kinesin family. Unc-104 subfamily.

It is found in the cytoplasm. It localises to the cytoskeleton. Its function is as follows. Probable motor protein. The chain is Kinesin-like protein KIF1C (Kif1c) from Rattus norvegicus (Rat).